We begin with the raw amino-acid sequence, 137 residues long: MPPKSRSTGPKKTQKTRRRDKKNIPHGAAHIKSTFNNTIVSITDPAGNVISWASSGHVGFKGSRKSTPFAAQLAAESAARKAQEHGVKKVDVFVKGPGSGRETAIRSLQAAGLEVGTISDVTPQPHNGCRPPKRRRV.

The span at 1-10 (MPPKSRSTGP) shows a compositional bias: polar residues. 2 disordered regions span residues 1 to 27 (MPPK…IPHG) and 116 to 137 (GTIS…RRRV). A compositionally biased stretch (basic residues) spans 12 to 21 (KTQKTRRRDK).

Belongs to the universal ribosomal protein uS11 family. As to quaternary structure, part of the 30S ribosomal subunit. Interacts with proteins S7 and S18. Binds to IF-3.

Located on the platform of the 30S subunit, it bridges several disparate RNA helices of the 16S rRNA. Forms part of the Shine-Dalgarno cleft in the 70S ribosome. In Rhodococcus erythropolis (strain PR4 / NBRC 100887), this protein is Small ribosomal subunit protein uS11.